Reading from the N-terminus, the 211-residue chain is tRNA (pseudouridine(54)-N(1))-methyltransferase (211 aa).

L128, G150, and C183 together coordinate S-adenosyl-L-methionine.

It belongs to the methyltransferase superfamily. TrmY family. As to quaternary structure, homodimer.

It localises to the cytoplasm. The enzyme catalyses pseudouridine(54) in tRNA + S-adenosyl-L-methionine = N(1)-methylpseudouridine(54) in tRNA + S-adenosyl-L-homocysteine + H(+). Functionally, specifically catalyzes the N1-methylation of pseudouridine at position 54 (Psi54) in tRNAs. This Methanosarcina mazei (strain ATCC BAA-159 / DSM 3647 / Goe1 / Go1 / JCM 11833 / OCM 88) (Methanosarcina frisia) protein is tRNA (pseudouridine(54)-N(1))-methyltransferase.